We begin with the raw amino-acid sequence, 150 residues long: Arginine repressor (150 aa).

Belongs to the ArgR family.

It is found in the cytoplasm. It functions in the pathway amino-acid biosynthesis; L-arginine biosynthesis [regulation]. Regulates arginine biosynthesis genes. In Clostridium botulinum (strain 657 / Type Ba4), this protein is Arginine repressor.